The sequence spans 139 residues: 3-hydroxyacyl-[acyl-carrier-protein] dehydratase FabZ (139 aa).

His46 is an active-site residue.

It belongs to the thioester dehydratase family. FabZ subfamily.

The protein resides in the cytoplasm. It carries out the reaction a (3R)-hydroxyacyl-[ACP] = a (2E)-enoyl-[ACP] + H2O. Its function is as follows. Involved in unsaturated fatty acids biosynthesis. Catalyzes the dehydration of short chain beta-hydroxyacyl-ACPs and long chain saturated and unsaturated beta-hydroxyacyl-ACPs. The protein is 3-hydroxyacyl-[acyl-carrier-protein] dehydratase FabZ of Streptococcus pyogenes serotype M1.